The sequence spans 102 residues: NADH-quinone oxidoreductase subunit K (102 aa).

3 consecutive transmembrane segments (helical) span residues 6–26 (ATHF…GVLT), 31–51 (LVIF…LIGF), and 62–82 (VFAL…LGIV).

It belongs to the complex I subunit 4L family. As to quaternary structure, NDH-1 is composed of 14 different subunits. Subunits NuoA, H, J, K, L, M, N constitute the membrane sector of the complex.

It localises to the cell membrane. It carries out the reaction a quinone + NADH + 5 H(+)(in) = a quinol + NAD(+) + 4 H(+)(out). Functionally, NDH-1 shuttles electrons from NADH, via FMN and iron-sulfur (Fe-S) centers, to quinones in the respiratory chain. The immediate electron acceptor for the enzyme in this species is believed to be ubiquinone. Couples the redox reaction to proton translocation (for every two electrons transferred, four hydrogen ions are translocated across the cytoplasmic membrane), and thus conserves the redox energy in a proton gradient. In Thermomicrobium roseum (strain ATCC 27502 / DSM 5159 / P-2), this protein is NADH-quinone oxidoreductase subunit K.